The chain runs to 518 residues: Serine/threonine-protein kinase UL13 (518 aa).

Positions 1–119 are disordered; that stretch reads MDESRRQRPA…QAALTAPPSS (119 aa). The Protein kinase domain maps to 151 to 518; it reads PGARSFGGSG…TNPCARHALS (368 aa). ATP contacts are provided by residues 157 to 165 and Lys-176; that span reads GGSGGYGDV. Asp-277 serves as the catalytic Proton acceptor.

The protein belongs to the protein kinase superfamily. Ser/Thr protein kinase family. In terms of processing, autophosphorylated.

The protein localises to the virion tegument. It localises to the host nucleus. It carries out the reaction L-seryl-[protein] + ATP = O-phospho-L-seryl-[protein] + ADP + H(+). It catalyses the reaction L-threonyl-[protein] + ATP = O-phospho-L-threonyl-[protein] + ADP + H(+). In terms of biological role, multifunctional serine/threonine kinase that plays a role in several processes including egress of virus particles from the nucleus, modulation of the actin cytoskeleton and regulation of viral and cellular gene expression. Regulates the nuclear localization of viral envelopment factors UL34 and UL31, by phosphorylating the US3 kinase, indicating a role in nuclear egress. Disrupts host nuclear lamins, including LMNA and LMNB1. Phosphorylates the viral Fc receptor composed of glycoproteins E (gE) and I (gI). Phosphorylation of glycoprotein E (gE) by UL13 alters its subcellular localization, from the host early endosome to the plasma membrane. Participates in the transcriptional regulation of cellular and viral mRNAs mainly by phosphorylating the viral transcriptional regulator ICP22. Additional substrates have been identified, including UL41, UL49 or host EF1D. The sequence is that of Serine/threonine-protein kinase UL13 from Homo sapiens (Human).